Consider the following 258-residue polypeptide: Imidazole glycerol phosphate synthase subunit HisF (258 aa).

Catalysis depends on residues Asp-11 and Asp-130.

Belongs to the HisA/HisF family. Heterodimer of HisH and HisF.

It localises to the cytoplasm. It carries out the reaction 5-[(5-phospho-1-deoxy-D-ribulos-1-ylimino)methylamino]-1-(5-phospho-beta-D-ribosyl)imidazole-4-carboxamide + L-glutamine = D-erythro-1-(imidazol-4-yl)glycerol 3-phosphate + 5-amino-1-(5-phospho-beta-D-ribosyl)imidazole-4-carboxamide + L-glutamate + H(+). It functions in the pathway amino-acid biosynthesis; L-histidine biosynthesis; L-histidine from 5-phospho-alpha-D-ribose 1-diphosphate: step 5/9. IGPS catalyzes the conversion of PRFAR and glutamine to IGP, AICAR and glutamate. The HisF subunit catalyzes the cyclization activity that produces IGP and AICAR from PRFAR using the ammonia provided by the HisH subunit. The chain is Imidazole glycerol phosphate synthase subunit HisF from Cronobacter sakazakii (strain ATCC BAA-894) (Enterobacter sakazakii).